A 400-amino-acid polypeptide reads, in one-letter code: Large envelope protein (400 aa).

Met1 carries the post-translational modification N-acetylmethionine. The N-myristoyl glycine; by host moiety is linked to residue Gly2. A pre-S1 region spans residues Gly2–Ala119. The pre-S stretch occupies residues Gly2–Asn174. The Virion surface; in external conformation portion of the chain corresponds to Gly2–Gly181. At Gly2–Arg253 the chain is on the intravirion; in internal conformation side. A glycan (N-linked (GlcNAc...) asparagine) is linked at Pro4. The segment at Pro70 to Thr115 is disordered. The span at Pro79 to Ser88 shows a compositional bias: polar residues. The interval Met120–Asn174 is pre-S2. Residues Leu182 to Ile202 form a helical membrane-spanning segment. At Pro203–Arg253 the chain is on the intravirion; in external conformation side. The chain crosses the membrane as a helical span at residues Phe254 to Tyr274. Residues Gln275–Ser348 are Virion surface-facing. Asn320 carries an N-linked (GlcNAc...) asparagine; by host glycan. Residues Leu349 to Ile369 traverse the membrane as a helical segment. Residues Trp370–Trp375 are Intravirion-facing. The chain crosses the membrane as a helical span at residues Gly376–Ala398. The Virion surface portion of the chain corresponds to Ser399–Ile400.

The protein belongs to the orthohepadnavirus major surface antigen family. As to quaternary structure, in its internal form (Li-HBsAg), interacts with the capsid protein and with the isoform S. Interacts with host chaperone CANX. In terms of assembly, associates with host chaperone CANX through its pre-S2 N glycan; this association may be essential for isoform M proper secretion. Interacts with isoform L. Interacts with the antigens of satellite virus HDV (HDVAgs); this interaction is required for encapsidation of HDV genomic RNA. Post-translationally, isoform M is N-terminally acetylated by host at a ratio of 90%, and N-glycosylated by host at the pre-S2 region. Myristoylated.

The protein resides in the virion membrane. Its function is as follows. The large envelope protein exists in two topological conformations, one which is termed 'external' or Le-HBsAg and the other 'internal' or Li-HBsAg. In its external conformation the protein attaches the virus to cell receptors and thereby initiating infection. This interaction determines the species specificity and liver tropism. This attachment induces virion internalization predominantly through caveolin-mediated endocytosis. The large envelope protein also assures fusion between virion membrane and endosomal membrane. In its internal conformation the protein plays a role in virion morphogenesis and mediates the contact with the nucleocapsid like a matrix protein. In terms of biological role, the middle envelope protein plays an important role in the budding of the virion. It is involved in the induction of budding in a nucleocapsid independent way. In this process the majority of envelope proteins bud to form subviral lipoprotein particles of 22 nm of diameter that do not contain a nucleocapsid. In Homo sapiens (Human), this protein is Large envelope protein.